Reading from the N-terminus, the 440-residue chain is Origin recognition complex subunit 4 (440 aa).

An ATP-binding site is contributed by 64–71; sequence GPKGSGKS.

Belongs to the ORC4 family. In terms of assembly, ORC is composed of six subunits.

It localises to the nucleus. Functionally, component of the origin recognition complex (ORC) that binds origins of replication. DNA-binding is ATP-dependent, however specific DNA sequences that define origins of replication have not been identified so far. ORC is required to assemble the pre-replication complex necessary to initiate DNA replication. This is Origin recognition complex subunit 4 (orcD) from Dictyostelium discoideum (Social amoeba).